We begin with the raw amino-acid sequence, 150 residues long: Actin-depolymerizing factor 3 (150 aa).

One can recognise an ADF-H domain in the interval 7-150 (GVAVSEECKA…TLDVLKDHTS (144 aa)).

It belongs to the actin-binding proteins ADF family.

Functionally, actin-depolymerizing protein. Severs actin filaments (F-actin) and binds to actin monomers. The protein is Actin-depolymerizing factor 3 (ADF3) of Oryza sativa subsp. japonica (Rice).